The chain runs to 375 residues: Chanoclavine-I aldehyde reductase ifgG (375 aa).

Residues P31 to T33, A66, Q108, and H176 contribute to the FMN site. Residues H176 and N179 each contribute to the substrate site. Y181 acts as the Proton donor in catalysis. FMN-binding positions include K228, G300, G325–R326, and R326. Position 353 (Y353) interacts with substrate.

Belongs to the NADH:flavin oxidoreductase/NADH oxidase family. The cofactor is FMN.

It catalyses the reaction dihydrochanoclavine-I aldehyde + NADP(+) = chanoclavine-I aldehyde + NADPH + H(+). It functions in the pathway alkaloid biosynthesis; ergot alkaloid biosynthesis. Functionally, chanoclavine-I aldehyde reductase; part of the gene cluster that mediates the biosynthesis of isofumigaclavines, fungal ergot alkaloids. The tryptophan dimethylallyltransferase ifgA catalyzes the first step of ergot alkaloid biosynthesis by condensing dimethylallyl diphosphate (DMAP) and tryptophan to form 4-dimethylallyl-L-tryptophan. The second step is catalyzed by the methyltransferase ifgB that methylates 4-dimethylallyl-L-tryptophan in the presence of S-adenosyl-L-methionine, resulting in the formation of N-methyl-dimethylallyl-L-tryptophan. The catalase ifgD and the FAD-dependent oxidoreductase ifgC then transform N-methyl-dimethylallyl-L-tryptophan to chanoclavine-I which is further oxidized by ifgE in the presence of NAD(+), resulting in the formation of chanoclavine-I aldehyde. The chanoclavine-I aldehyde reductases ifgG and/or fgaOx3 reduce chanoclavine-I aldehyde to dihydrochanoclavine-I aldehyde that spontaneously dehydrates to form 6,8-dimethyl-6,7-didehydroergoline. The festuclavine dehydrogenases ifgF1 and/or ifgF2 then catalyze the reduction of 6,8-dimethyl-6,7-didehydroergoline to form festuclavine. Hydrolysis of festuclavine by a yet undetermined cytochrome P450 monooxygenase (called ifgH) then leads to the formation of isofumigaclavine B which is in turn acetylated by ifgI to isofumigaclavine A. Penicillium roqueforti has interestingly at least two sets of genes for the consumption of chanoclavine-I aldehyde on three different loci, the OYEs ifgG/fgaOx3 and the festuclavine synthase homologs ifgF1/ifgF2. The reason for the duplication of these genes is unclear, probably to ensure the conversion of chanoclavine-I aldehyde by differential gene expression under various environmental conditions. In Penicillium roqueforti (strain FM164), this protein is Chanoclavine-I aldehyde reductase ifgG.